Reading from the N-terminus, the 79-residue chain is DNA-directed RNA polymerase subunit omega (79 aa).

This sequence belongs to the RNA polymerase subunit omega family. In terms of assembly, the RNAP catalytic core consists of 2 alpha, 1 beta, 1 beta' and 1 omega subunit. When a sigma factor is associated with the core the holoenzyme is formed, which can initiate transcription.

The enzyme catalyses RNA(n) + a ribonucleoside 5'-triphosphate = RNA(n+1) + diphosphate. Functionally, promotes RNA polymerase assembly. Latches the N- and C-terminal regions of the beta' subunit thereby facilitating its interaction with the beta and alpha subunits. This chain is DNA-directed RNA polymerase subunit omega, found in Thermotoga petrophila (strain ATCC BAA-488 / DSM 13995 / JCM 10881 / RKU-1).